The chain runs to 1553 residues: Dual oxidase 1 (1553 aa).

A signal peptide spans 1-21 (MGFRLALAWTLLVGPWMPMGA). The Extracellular segment spans residues 22-596 (RNSISWEVQR…YFKGSGFGFG (575 aa)). The peroxidase-like; mediates peroxidase activity stretch occupies residues 26–593 (SWEVQRFDGW…MRDYFKGSGF (568 aa)). Residues N94, N342, N354, and N534 are each glycosylated (N-linked (GlcNAc...) asparagine). Residues 597 to 617 (VTIGTLCCFPLVSLLSAWIVA) form a helical membrane-spanning segment. Topologically, residues 618 to 1046 (QLRRRNFKRL…KRFVENYRRH (429 aa)) are cytoplasmic. EF-hand domains lie at 815-850 (PQDM…FMKG), 851-886 (SPEE…FIEI), and 895-930 (QLTE…HDSE). The Ca(2+) site is built by D828, D830, N832, Y834, E839, D864, D866, N868, and E875. The segment at 956–1250 (YISQEKLCPS…GSFALIQLPR (295 aa)) is interaction with TXNDC11. A helical transmembrane segment spans residues 1047–1067 (IGCLAVFYTIAGGLFLERAYY). Topologically, residues 1068–1082 (YAFAAHHMGITDTTR) are extracellular. The helical transmembrane segment at 1083-1103 (VGIILSRGTAASISFMFSYIL) threads the bilayer. The Ferric oxidoreductase domain maps to 1089–1271 (RGTAASISFM…YVGDKLVSLS (183 aa)). The Cytoplasmic portion of the chain corresponds to 1104–1138 (LTMCRNLITFLRETFLNRYVPFDAAVDFHRLIAST). Residues 1139–1159 (AIILTVLHSAGHVVNVYLFSI) form a helical membrane-spanning segment. At 1160–1190 (SPLSVLSCLFPGLFHDNGSEFPQKYYWWFFQ) the chain is on the extracellular side. A helical membrane pass occupies residues 1191–1211 (TVPGLTGVMLLLILAIMYVFA). The Cytoplasmic segment spans residues 1212–1228 (SHHFRRCSFRGFWLTHH). Residues 1229–1249 (LYILLYMLLIIHGSFALIQLP) traverse the membrane as a helical segment. Position 1250 (R1250) is a topological domain, extracellular. A helical membrane pass occupies residues 1251 to 1271 (FHIFFLVPALIYVGDKLVSLS). The FAD-binding FR-type domain maps to 1272–1378 (RKKVEISVVK…DGPFGEGHQE (107 aa)). Topologically, residues 1272–1553 (RKKVEISVVK…THFSHHYENF (282 aa)) are cytoplasmic.

The protein in the N-terminal section; belongs to the peroxidase family. Interacts with TXNDC11, TPO and CYBA. In terms of processing, N-glycosylated. Specifically expressed in thyroid.

Its subcellular location is the apical cell membrane. It carries out the reaction NADH + O2 + H(+) = H2O2 + NAD(+). The enzyme catalyses NADPH + O2 + H(+) = H2O2 + NADP(+). The protein operates within hormone biosynthesis; thyroid hormone biosynthesis. The NADPH oxidase activity is calcium-dependent. Peroxidase activity is inhibited by aminobenzohydrazide. Functionally, generates hydrogen peroxide which is required for the activity of thyroid peroxidase/TPO and lactoperoxidase/LPO. Plays a role in thyroid hormones synthesis and lactoperoxidase-mediated antimicrobial defense at the surface of mucosa. May have its own peroxidase activity through its N-terminal peroxidase-like domain. This Sus scrofa (Pig) protein is Dual oxidase 1 (DUOX1).